Reading from the N-terminus, the 667-residue chain is Leucine-rich repeat-containing protein 43 (667 aa).

A compositionally biased stretch (polar residues) spans 1-11; that stretch reads METSESSTSDY. Residues 1-24 form a disordered region; sequence METSESSTSDYRQTEGEGEGVPGT. LRR repeat units follow at residues 148-169, 170-191, 194-213, and 221-242; these read KLEE…NLPP, TLKV…CSAP, RLQH…ESLY, and QLVS…ILGL. One can recognise an LRRCT domain in the interval 256–294; it reads NPLSLVPYYRGFTIDSLAHLCVLDDITVSPNEKHQFRGL. Disordered stretches follow at residues 374-407, 533-570, and 616-640; these read FSGT…TEEM, ESPL…RQDP, and SKKV…SGYQ. Residues 377 to 386 show a composition bias toward acidic residues; that stretch reads TDEEDQQEDP. Basic residues predominate over residues 390-399; sequence RHRHRGRQRF. Basic and acidic residues predominate over residues 540-553; that stretch reads KGKDNNKKKEPAKD. Residues 617–627 are compositionally biased toward basic residues; sequence KKVKKSLKKDR.

This Mus musculus (Mouse) protein is Leucine-rich repeat-containing protein 43 (Lrrc43).